Here is a 277-residue protein sequence, read N- to C-terminus: Large ribosomal subunit protein uL2 (277 aa).

Residues 219–277 are disordered; that stretch reads RPQTRGSAMNPVDHPHGGGEGKKNSGRHPVTPWGKPTKGAKTRRKKASDKLIISRRKGK. Over residues 231–241 the composition is skewed to basic and acidic residues; it reads DHPHGGGEGKK. Residues 256–277 show a composition bias toward basic residues; that stretch reads KGAKTRRKKASDKLIISRRKGK.

It belongs to the universal ribosomal protein uL2 family. Part of the 50S ribosomal subunit. Forms a bridge to the 30S subunit in the 70S ribosome.

Functionally, one of the primary rRNA binding proteins. Required for association of the 30S and 50S subunits to form the 70S ribosome, for tRNA binding and peptide bond formation. It has been suggested to have peptidyltransferase activity; this is somewhat controversial. Makes several contacts with the 16S rRNA in the 70S ribosome. This is Large ribosomal subunit protein uL2 from Campylobacter curvus (strain 525.92).